The sequence spans 427 residues: Glutamate-1-semialdehyde 2,1-aminomutase (427 aa).

Lys-265 carries the N6-(pyridoxal phosphate)lysine modification.

It belongs to the class-III pyridoxal-phosphate-dependent aminotransferase family. HemL subfamily. As to quaternary structure, homodimer. Requires pyridoxal 5'-phosphate as cofactor.

The protein localises to the cytoplasm. The catalysed reaction is (S)-4-amino-5-oxopentanoate = 5-aminolevulinate. Its pathway is porphyrin-containing compound metabolism; protoporphyrin-IX biosynthesis; 5-aminolevulinate from L-glutamyl-tRNA(Glu): step 2/2. In Nitratiruptor sp. (strain SB155-2), this protein is Glutamate-1-semialdehyde 2,1-aminomutase.